We begin with the raw amino-acid sequence, 224 residues long: MSAVGPAAAHLHRPGDSHSDCVSFLGAQLPPEVAAMPQLLGDLDRATFRKLLKLVVSSLQGEDCREAVQHLRAGANLPEEQLGALIAGTHTLLQQALRLPPASLKPDTFKNQLQELCIPQDLVVDLASVVFGSQRPLLDSVARQQGAWLPHIADFRWRVDVAISTSALARSLQPSVLMHLKLSDGSALRFEVPTAKFQELRFAVALVLKEMADLEKRCERKLQD.

An N-acetylserine modification is found at serine 2. One can recognise a COMM domain in the interval 151 to 215 (HIADFRWRVD…LVLKEMADLE (65 aa)).

It belongs to the COMM domain-containing protein 5 family. Component of the commander complex consisting of the CCC subcomplex and the retriever subcomplex. Component of the CCC (COMMD/CCDC22/CCDC93) subcomplex consisting of COMMD1, COMMD2, COMMD3, COMMD4, COMMD5, COMMD6, COMMD7, COMMD8, COMMD9, COMMD10, CCDC22 and CCDC93; within the complex forms a heterodimer with COMMD10. Interacts (via COMM domain) with COMMD1 (via COMM domain). Interacts with RELA, RELB, NFKB1/p105. Interacts with CCDC22, CCDC93, SCNN1B, CUL2, CUL3, CUL4A, CUL4B, CUL7.

It is found in the nucleus. The protein localises to the cytoplasm. Scaffold protein in the commander complex that is essential for endosomal recycling of transmembrane cargos; the commander complex is composed of the CCC subcomplex and the retriever subcomplex. May modulate activity of cullin-RING E3 ubiquitin ligase (CRL) complexes. Negatively regulates cell proliferation. Negatively regulates cell cycle G2/M phase transition probably by transactivating p21/CDKN1A through the p53/TP53-independent signaling pathway. Involved in kidney proximal tubule morphogenesis. Down-regulates activation of NF-kappa-B. The polypeptide is COMM domain-containing protein 5 (COMMD5) (Bos taurus (Bovine)).